Reading from the N-terminus, the 90-residue chain is uncharacterized protein (90 aa).

This is an uncharacterized protein from Homo sapiens (Human).